The primary structure comprises 1392 residues: DNA-directed RNA polymerase subunit beta'' (1392 aa).

Zn(2+) contacts are provided by C224, C295, C302, and C305.

It belongs to the RNA polymerase beta' chain family. RpoC2 subfamily. In plastids the minimal PEP RNA polymerase catalytic core is composed of four subunits: alpha, beta, beta', and beta''. When a (nuclear-encoded) sigma factor is associated with the core the holoenzyme is formed, which can initiate transcription. The cofactor is Zn(2+).

It is found in the plastid. It localises to the chloroplast. It carries out the reaction RNA(n) + a ribonucleoside 5'-triphosphate = RNA(n+1) + diphosphate. Its function is as follows. DNA-dependent RNA polymerase catalyzes the transcription of DNA into RNA using the four ribonucleoside triphosphates as substrates. The polypeptide is DNA-directed RNA polymerase subunit beta'' (Solanum bulbocastanum (Wild potato)).